A 287-amino-acid polypeptide reads, in one-letter code: Protoheme IX farnesyltransferase (287 aa).

7 consecutive transmembrane segments (helical) span residues Leu-19–Thr-39, Met-100–Val-120, Phe-134–Val-154, Met-162–Ala-182, Val-212–Trp-232, Val-233–Ala-253, and Val-267–Phe-287.

This sequence belongs to the UbiA prenyltransferase family. Protoheme IX farnesyltransferase subfamily.

The protein resides in the cell inner membrane. It catalyses the reaction heme b + (2E,6E)-farnesyl diphosphate + H2O = Fe(II)-heme o + diphosphate. It participates in porphyrin-containing compound metabolism; heme O biosynthesis; heme O from protoheme: step 1/1. Converts heme B (protoheme IX) to heme O by substitution of the vinyl group on carbon 2 of heme B porphyrin ring with a hydroxyethyl farnesyl side group. The protein is Protoheme IX farnesyltransferase of Nitratidesulfovibrio vulgaris (strain ATCC 29579 / DSM 644 / CCUG 34227 / NCIMB 8303 / VKM B-1760 / Hildenborough) (Desulfovibrio vulgaris).